Reading from the N-terminus, the 600-residue chain is Arginine--tRNA ligase (600 aa).

The short motif at 123–133 (PNVAKPMHVGH) is the 'HIGH' region element.

It belongs to the class-I aminoacyl-tRNA synthetase family. As to quaternary structure, monomer.

Its subcellular location is the cytoplasm. It catalyses the reaction tRNA(Arg) + L-arginine + ATP = L-arginyl-tRNA(Arg) + AMP + diphosphate. This Caulobacter vibrioides (strain NA1000 / CB15N) (Caulobacter crescentus) protein is Arginine--tRNA ligase.